Reading from the N-terminus, the 71-residue chain is SPbeta prophage-derived uncharacterized protein YopF (71 aa).

The sequence is that of SPbeta prophage-derived uncharacterized protein YopF (yopF) from Bacillus subtilis (strain 168).